The primary structure comprises 146 residues: FAD synthase (146 aa).

Residues 9 to 10, 14 to 17, and Asp92 contribute to the ATP site; these read TF and HPGH.

It belongs to the archaeal FAD synthase family. As to quaternary structure, homodimer. A divalent metal cation is required as a cofactor.

The catalysed reaction is FMN + ATP + H(+) = FAD + diphosphate. It functions in the pathway cofactor biosynthesis; FAD biosynthesis; FAD from FMN: step 1/1. Functionally, catalyzes the transfer of the AMP portion of ATP to flavin mononucleotide (FMN) to produce flavin adenine dinucleotide (FAD) coenzyme. This chain is FAD synthase, found in Halobacterium salinarum (strain ATCC 29341 / DSM 671 / R1).